The primary structure comprises 470 residues: Ribulose bisphosphate carboxylase large chain (470 aa).

Substrate is bound by residues asparagine 115 and threonine 165. Catalysis depends on lysine 167, which acts as the Proton acceptor. Lysine 169 is a binding site for substrate. Residues lysine 193, aspartate 195, and glutamate 196 each coordinate Mg(2+). At lysine 193 the chain carries N6-carboxylysine. The Proton acceptor role is filled by histidine 286. Positions 287, 319, and 371 each coordinate substrate.

The protein belongs to the RuBisCO large chain family. Type I subfamily. In terms of assembly, heterohexadecamer of 8 large chains and 8 small chains. It depends on Mg(2+) as a cofactor.

Its subcellular location is the carboxysome. It catalyses the reaction 2 (2R)-3-phosphoglycerate + 2 H(+) = D-ribulose 1,5-bisphosphate + CO2 + H2O. It carries out the reaction D-ribulose 1,5-bisphosphate + O2 = 2-phosphoglycolate + (2R)-3-phosphoglycerate + 2 H(+). RuBisCO catalyzes two reactions: the carboxylation of D-ribulose 1,5-bisphosphate, the primary event in carbon dioxide fixation, as well as the oxidative fragmentation of the pentose substrate in the photorespiration process. Both reactions occur simultaneously and in competition at the same active site. The polypeptide is Ribulose bisphosphate carboxylase large chain (Prochlorococcus marinus (strain SARG / CCMP1375 / SS120)).